We begin with the raw amino-acid sequence, 309 residues long: Protein phosphatase 1 regulatory subunit 42 (309 aa).

LRR repeat units lie at residues 29–50 (KITHINFSDKNIDAIEDLSLCK), 51–72 (NLSVLYLYDNCISQITNLNYAT), 73–94 (NLTHLYLQNNCISCIENLRSLK), 95–116 (KLEKLYLGGNYIAVIEGLEGLG), 117–138 (ELRELHVENQRLPLGEKLLFDP), 147–168 (SLCILNISNNNIDDITDLELLE), and 169–190 (NLNQLIAVDNQLLHVKDLEFLL). Residues 204–242 (NPVCLKPKYRDRLILVSKSLEFLDGKEIKNIERQFLMNW) enclose the LRRCT domain.

Interacts with PPP1CC isoform gamma-2; the interaction is direct. Interacts with actin, dynein, KIF5B, KIFC1 and tubulin. Associates with microtubules. Phosphorylated; in the testis.

It is found in the cytoplasm. The protein localises to the cytoskeleton. Its subcellular location is the microtubule organizing center. It localises to the centrosome. In terms of biological role, regulates phosphatase activity of protein phosphatase 1 (PP1) complexes in the testis. This is Protein phosphatase 1 regulatory subunit 42 from Homo sapiens (Human).